We begin with the raw amino-acid sequence, 471 residues long: V-type ATP synthase beta chain (471 aa).

The protein belongs to the ATPase alpha/beta chains family.

Produces ATP from ADP in the presence of a proton gradient across the membrane. The V-type beta chain is a regulatory subunit. The sequence is that of V-type ATP synthase beta chain from Streptococcus pyogenes serotype M18 (strain MGAS8232).